The chain runs to 97 residues: Venom peptide HsVx1 (97 aa).

Residues 1–20 (MSHLRIAVTFLCTLFALTAG) form the signal peptide.

Belongs to the scorpion La1-like peptide family. In terms of processing, contains 4 disulfide bonds. Expressed by the venom gland.

The protein resides in the secreted. The sequence is that of Venom peptide HsVx1 from Heterometrus spinifer (Asia giant forest scorpion).